The following is a 546-amino-acid chain: SusD-like protein BACOVA_02651 (546 aa).

Positions 1 to 21 (MRIFMKSKLLVIATTALLFAA) are cleaved as a signal peptide. Cys-22 carries the N-palmitoyl cysteine lipid modification. Cys-22 carries the S-diacylglycerol cysteine lipid modification.

This sequence belongs to the SusD family.

The protein localises to the cell outer membrane. Its pathway is glucan metabolism; xyloglucan degradation. In terms of biological role, polysaccharide-binding protein present at the surface of the cell. Probably mediates xyloglucan-binding before xyloglucan transport in the periplasm for degradation. The chain is SusD-like protein BACOVA_02651 from Bacteroides ovatus (strain ATCC 8483 / DSM 1896 / JCM 5824 / BCRC 10623 / CCUG 4943 / NCTC 11153).